The primary structure comprises 263 residues: Regulatory protein RecX (263 aa).

The protein belongs to the RecX family.

The protein localises to the cytoplasm. Its function is as follows. Modulates RecA activity. This Bacillus licheniformis (strain ATCC 14580 / DSM 13 / JCM 2505 / CCUG 7422 / NBRC 12200 / NCIMB 9375 / NCTC 10341 / NRRL NRS-1264 / Gibson 46) protein is Regulatory protein RecX.